Here is a 99-residue protein sequence, read N- to C-terminus: MEADMKLAVVTGQIVCTVRHQGLAHDKLLMVEMIDAQGNPDGQCAVAIDSIGAGTGEWVLLVSGSSARQAHRSELSPVDLCVIGIVDEVVAGGKVVFHK.

Positions methionine 5–aspartate 87 constitute a BMV domain.

Belongs to the CcmL/EutN family. As to quaternary structure, homopentamer with a small central pore.

Its subcellular location is the bacterial microcompartment. It participates in amine and polyamine degradation; ethanolamine degradation. Probably forms vertices in the bacterial microcompartment (BMC) shell dedicated to ethanolamine degradation. Expression of eutK, eutL, eutM, eutN, eutS (eutSMNLK) in E.coli leads to formation of a single BMC. Coexpression of eutQ with eutSMNLK permits E.coli to make cells with more than one mobile BMC, as is usual in vivo. It may be involved in transporting positively charged molecules into and out of the BMC. In terms of biological role, the ethanolamine (EA) catabolic bacterial microcompartment (BMC) probably concentrates low levels of ethanolamine catabolic enzymes, concentrates volatile reaction intermediates, keeps the level of toxic acetaldehyde low, generates enough acetyl-CoA to support cell growth, and maintains a pool of free coenzyme A (CoA) and NAD. Functionally, expression of the eut operon allows this bacteria to use ethanolamine (EA) as a carbon, nitrogen and energy source. It relies on cobalamin (vitamin B12) both as a cofactor for the ethanolamine ammonia-lyase (EAL) activity and to induce the operon. EA enhances bacterial survival in macrophages in a concentration-dependent manner, suggesting it is an important nutrient during infection. The sequence is that of Bacterial microcompartment shell vertex protein EutN from Salmonella typhimurium (strain LT2 / SGSC1412 / ATCC 700720).